A 762-amino-acid chain; its full sequence is Serine/threonine-protein kinase PLK4 (762 aa).

Positions 14–268 (YEVQHLLGKG…LEQVLRHPFM (255 aa)) constitute a Protein kinase domain. ATP is bound by residues 20–28 (LGKGGFACV) and Lys-43. Catalysis depends on Asp-139, which acts as the Proton acceptor. One can recognise a Cryptic POLO box 1 (CPB1) domain in the interval 383 to 498 (AECISMPPLN…ARFVSLVKSK (116 aa)). Positions 499-602 (TPKVTYFSGL…GRRPTPEVMP (104 aa)) constitute a Cryptic POLO box 2 (CPB2) domain. The POLO box domain occupies 657-736 (PIKRLNVPGV…LPQVQMKLKS (80 aa)).

It belongs to the protein kinase superfamily. Ser/Thr protein kinase family. CDC5/Polo subfamily. As to quaternary structure, homodimer. Post-translationally, ubiquitinated by the SCF(Slimb) ubiquitin ligase complex; leading to its degradation by the proteasome during interphase and regulating centriole number and ensuring the block to centriole reduplication.

The protein localises to the cytoplasm. It localises to the cytoskeleton. It is found in the microtubule organizing center. Its subcellular location is the centrosome. The protein resides in the centriole. It carries out the reaction L-seryl-[protein] + ATP = O-phospho-L-seryl-[protein] + ADP + H(+). The catalysed reaction is L-threonyl-[protein] + ATP = O-phospho-L-threonyl-[protein] + ADP + H(+). Serine/threonine-protein kinase that plays a central role in centriole duplication. Able to trigger procentriole formation on the surface of the mother centriole cylinder, using mother centriole as a platform, leading to the recruitment of centriole biogenesis proteins such as sas-6. When overexpressed, it is able to induce centrosome amplification through the simultaneous generation of multiple procentrioles adjoining each parental centriole during S phase. Centrosome amplification following overexpression can initiate tumorigenesis, highlighting the importance of centrosome regulation in cancers. The protein is Serine/threonine-protein kinase PLK4 (SAK) of Drosophila grimshawi (Hawaiian fruit fly).